The sequence spans 359 residues: Golgi-resident adenosine 3',5'-bisphosphate 3'-phosphatase (359 aa).

Methionine 1 is subject to N-acetylmethionine. Residues 1-12 are Cytoplasmic-facing; sequence MAPMGIRLSPLG. A helical transmembrane segment spans residues 13–33; it reads VAVFCLLGLGVLYHLYSGFLA. At 34–359 the chain is on the lumenal side; sequence GRFSLFGLGG…LPDLEKTGHK (326 aa). The disordered stretch occupies residues 86-106; it reads ESNVLHEKSKGKTREGAEDKM. The Proton acceptor role is filled by aspartate 110. Glutamate 133, aspartate 174, leucine 176, and aspartate 177 together coordinate Mg(2+). Catalysis depends on threonine 179, which acts as the Proton acceptor. Residues serine 242 and histidine 245 each coordinate AMP. An N-linked (GlcNAc...) asparagine glycan is attached at asparagine 259. Glycine 268 and lysine 272 together coordinate AMP. Residue aspartate 300 participates in Mg(2+) binding.

The protein belongs to the inositol monophosphatase superfamily. It depends on Mg(2+) as a cofactor. In terms of processing, contains N-linked glycan resistant to endoglycosydase H.

The protein localises to the golgi apparatus. The protein resides in the trans-Golgi network membrane. It carries out the reaction adenosine 3',5'-bisphosphate + H2O = AMP + phosphate. Its pathway is sulfur metabolism. With respect to regulation, strongly inhibited by lithium. Functionally, exhibits 3'-nucleotidase activity toward adenosine 3',5'-bisphosphate (PAP), namely hydrolyzes adenosine 3',5'-bisphosphate into adenosine 5'-monophosphate (AMP) and a phosphate. May play a role in the formation of skeletal elements derived through endochondral ossification, possibly by clearing adenosine 3',5'-bisphosphate produced by Golgi sulfotransferases during glycosaminoglycan sulfation. Has no activity toward 3'-phosphoadenosine 5'-phosphosulfate (PAPS) or inositol phosphate (IP) substrates including I(1)P, I(1,4)P2, I(1,3,4)P3, I(1,4,5)P3 and I(1,3,4,5)P4. The protein is Golgi-resident adenosine 3',5'-bisphosphate 3'-phosphatase of Homo sapiens (Human).